The chain runs to 433 residues: Trigger factor (433 aa).

The 86-residue stretch at 161 to 246 folds into the PPIase FKBP-type domain; sequence GDRVTMDFVG…AKKVEARDLP (86 aa).

It belongs to the FKBP-type PPIase family. Tig subfamily.

Its subcellular location is the cytoplasm. The catalysed reaction is [protein]-peptidylproline (omega=180) = [protein]-peptidylproline (omega=0). Involved in protein export. Acts as a chaperone by maintaining the newly synthesized protein in an open conformation. Functions as a peptidyl-prolyl cis-trans isomerase. This chain is Trigger factor, found in Idiomarina loihiensis (strain ATCC BAA-735 / DSM 15497 / L2-TR).